The primary structure comprises 225 residues: LexA repressor (225 aa).

The segment at residues 26–46 (YEEMKDSLNLKSKSGIHRLIS) is a DNA-binding region (H-T-H motif). Active-site for autocatalytic cleavage activity residues include serine 146 and lysine 184.

This sequence belongs to the peptidase S24 family. Homodimer.

It catalyses the reaction Hydrolysis of Ala-|-Gly bond in repressor LexA.. Functionally, represses a number of genes involved in the response to DNA damage (SOS response), including recA and lexA. In the presence of single-stranded DNA, RecA interacts with LexA causing an autocatalytic cleavage which disrupts the DNA-binding part of LexA, leading to derepression of the SOS regulon and eventually DNA repair. This Pelagibacter ubique (strain HTCC1062) protein is LexA repressor.